Reading from the N-terminus, the 240-residue chain is MNTENLLKNNNVDHEEIAKFEAVASRWWDLEGEFKPLHRINPLRLGYIAERAGGLFGKKVLDVGCGGGILAESMAREGATVTGLDMGFEPLQVAKLHALESGIQVDYVQETVEEHAAKHAGQYDVVTCMEMLEHVPDPQSVVRACAQLVKPGGDVFFSTLNRNGKSWLMAVVGAEYILRMVPKGTHDVKKFIKPAELLGWVDQTSLKERHMTGLHYNPITNSFKLGPGVDVNYMLHTQNK.

S-adenosyl-L-methionine contacts are provided by Arg-44, Gly-64, Asp-85, and Met-129.

The protein belongs to the methyltransferase superfamily. UbiG/COQ3 family.

The enzyme catalyses a 3-demethylubiquinol + S-adenosyl-L-methionine = a ubiquinol + S-adenosyl-L-homocysteine + H(+). It catalyses the reaction a 3-(all-trans-polyprenyl)benzene-1,2-diol + S-adenosyl-L-methionine = a 2-methoxy-6-(all-trans-polyprenyl)phenol + S-adenosyl-L-homocysteine + H(+). Its pathway is cofactor biosynthesis; ubiquinone biosynthesis. In terms of biological role, O-methyltransferase that catalyzes the 2 O-methylation steps in the ubiquinone biosynthetic pathway. The chain is Ubiquinone biosynthesis O-methyltransferase from Escherichia coli (strain SMS-3-5 / SECEC).